A 196-amino-acid chain; its full sequence is Probable malonic semialdehyde reductase RutE (196 aa).

It belongs to the nitroreductase family. HadB/RutE subfamily. FMN is required as a cofactor.

It catalyses the reaction 3-hydroxypropanoate + NADP(+) = 3-oxopropanoate + NADPH + H(+). Functionally, may reduce toxic product malonic semialdehyde to 3-hydroxypropionic acid, which is excreted. The polypeptide is Probable malonic semialdehyde reductase RutE (Cronobacter sakazakii (strain ATCC BAA-894) (Enterobacter sakazakii)).